Here is a 215-residue protein sequence, read N- to C-terminus: Probable phosphoglycerate mutase GpmB (215 aa).

Substrate is bound by residues 8-15, 21-22, R58, R60, 82-85, 104-105, and 151-152; these read RHGETQWN, QG, ELNM, RR, and GI. The Tele-phosphohistidine intermediate role is filled by H9. E82 acts as the Proton donor/acceptor in catalysis.

The protein belongs to the phosphoglycerate mutase family. GpmB subfamily.

It carries out the reaction (2R)-2-phosphoglycerate = (2R)-3-phosphoglycerate. It participates in carbohydrate degradation; glycolysis; pyruvate from D-glyceraldehyde 3-phosphate: step 3/5. This is Probable phosphoglycerate mutase GpmB from Escherichia fergusonii (strain ATCC 35469 / DSM 13698 / CCUG 18766 / IAM 14443 / JCM 21226 / LMG 7866 / NBRC 102419 / NCTC 12128 / CDC 0568-73).